The following is a 317-amino-acid chain: Tumor-associated calcium signal transducer 2 (317 aa).

The first 24 residues, 1–24, serve as a signal peptide directing secretion; sequence MARGLDLAPLLLLLLAMVAGFCTA. Residues 25-270 lie on the Extracellular side of the membrane; sequence QINCTCPTNK…QFSMKRLTTG (246 aa). N-linked (GlcNAc...) asparagine glycosylation occurs at asparagine 27. The Thyroglobulin type-1 domain maps to 64-139; sequence TSKCLLLKAR…TDKGDQSLRC (76 aa). Disulfide bonds link cysteine 67–cysteine 102, cysteine 113–cysteine 119, and cysteine 121–cysteine 139. Asparagine 114 carries N-linked (GlcNAc...) asparagine glycosylation. 2 N-linked (GlcNAc...) asparagine glycosylation sites follow: asparagine 162 and asparagine 202. Residues 271 to 291 traverse the membrane as a helical segment; it reads LIAVIAVVAVALVAGVVVLVV. Topologically, residues 292–317 are cytoplasmic; the sequence is TNRRKSGKYKKVELKELGEMRSEPSL.

This sequence belongs to the EPCAM family.

Its subcellular location is the membrane. In terms of biological role, may function as a growth factor receptor. This is Tumor-associated calcium signal transducer 2 (Tacstd2) from Rattus norvegicus (Rat).